A 118-amino-acid chain; its full sequence is MISKPDKNKLRQKRHRRVRGKLSGTADRPRLNVFRSNTGIYAQVIDDVAGVTLASASTLDKEVSKGTKTEQAVAVGKLVAERANAKGISEVVFDRGGYLYHGRVKALADAARENGLKF.

The interval 1 to 25 (MISKPDKNKLRQKRHRRVRGKLSGT) is disordered. Over residues 10–20 (LRQKRHRRVRG) the composition is skewed to basic residues.

The protein belongs to the universal ribosomal protein uL18 family. As to quaternary structure, part of the 50S ribosomal subunit; part of the 5S rRNA/L5/L18/L25 subcomplex. Contacts the 5S and 23S rRNAs.

Functionally, this is one of the proteins that bind and probably mediate the attachment of the 5S RNA into the large ribosomal subunit, where it forms part of the central protuberance. This chain is Large ribosomal subunit protein uL18, found in Streptococcus pneumoniae (strain Hungary19A-6).